Reading from the N-terminus, the 421-residue chain is Synaptotagmin-12 (421 aa).

Residues 1–18 (MAVDVTEYHLSVIKSPPG) are Vesicular-facing. The helical transmembrane segment at 19-39 (WEVGVYAAGALALLGIAAVSL) threads the bilayer. Over 40-421 (WKLWTSGSFP…VSMWHPVRRN (382 aa)) the chain is Cytoplasmic. At serine 97 the chain carries Phosphoserine; by PKA. Phosphoserine occurs at positions 99 and 214. C2 domains lie at 152–272 (TLGQ…SGWL) and 283–416 (AVGE…SMWH).

This sequence belongs to the synaptotagmin family. In terms of assembly, homodimer. Can also form heterodimers. Interacts with SYT1. Post-translationally, phosphorylation of Ser-97 is required for mossy-fiber long-term potentiation. Expressed in the brain, specifically in neurons of the cerebellum, cortex, hippocampus, olfactory bulb, brainstem and spinal cord (at protein level).

It is found in the cytoplasmic vesicle. Its subcellular location is the secretory vesicle. The protein localises to the synaptic vesicle membrane. Its function is as follows. Synaptic vesicle phosphoprotein that enhances spontaneous neurotransmitter release but does not effect induced neurotransmitter release. Unlike other synaptotagmins, it does not bind Ca(2+) or phospholipids. Essential for mossy-fiber long-term potentiation in the hippocampus. The sequence is that of Synaptotagmin-12 from Rattus norvegicus (Rat).